The chain runs to 342 residues: Glucokinase (342 aa).

15–20 provides a ligand contact to ATP; sequence GDVGGT.

It belongs to the bacterial glucokinase family.

The protein resides in the cytoplasm. The catalysed reaction is D-glucose + ATP = D-glucose 6-phosphate + ADP + H(+). The chain is Glucokinase from Ralstonia nicotianae (strain ATCC BAA-1114 / GMI1000) (Ralstonia solanacearum).